Here is a 126-residue protein sequence, read N- to C-terminus: MPEHTKVSAEDQALLNKFARSYQTQTQLKADVKEAKTLIDNINEASDEILLLDDEDSASIPCRIGSCFVHFNGDSLNEHLEGKKTTAEKVLSEKTSELDAISADMEQIKKVLYAKFGDQINLDAEE.

This sequence belongs to the prefoldin subunit beta family. In terms of assembly, heterohexamer of two PFD-alpha type and four PFD-beta type subunits.

Functionally, binds specifically to cytosolic chaperonin (c-CPN) and transfers target proteins to it. Binds to nascent polypeptide chain and promotes folding in an environment in which there are many competing pathways for nonnative proteins. This is Probable prefoldin subunit 4 (pfd-4) from Caenorhabditis elegans.